A 109-amino-acid chain; its full sequence is Large ribosomal subunit protein uL24 (109 aa).

Residues methionine 1–lysine 24 form a disordered region.

Belongs to the universal ribosomal protein uL24 family. In terms of assembly, part of the 50S ribosomal subunit.

One of two assembly initiator proteins, it binds directly to the 5'-end of the 23S rRNA, where it nucleates assembly of the 50S subunit. Its function is as follows. One of the proteins that surrounds the polypeptide exit tunnel on the outside of the subunit. The polypeptide is Large ribosomal subunit protein uL24 (Koribacter versatilis (strain Ellin345)).